Here is a 267-residue protein sequence, read N- to C-terminus: FCS-Like Zinc finger 8 (267 aa).

2 disordered regions span residues 1–29 and 124–156; these read MLKK…KTTP and DSPI…GSPR. 2 stretches are compositionally biased toward polar residues: residues 15 to 28 and 126 to 141; these read ETNQ…SKTT and PISS…NSQP. The segment at 221-265 adopts an FLZ-type zinc-finger fold; it reads SFLSCCCNCKKSLGPRDDIFMYRGDRAFCSSECRSIEMMMSEEND.

The protein belongs to the FLZ family. Interacts with KIN10 and KIN11 via its FLZ-type zinc finger domain. Interacts with KINB1, KINB2, KINB3 and SNF4 via its N-terminal part. Interacts with HB21/ZHD3.

In terms of biological role, may act as an adapter to facilitate the interaction of SnRK1 complex with effector proteins, conferring tissue- and stimulus-type specific differences in the SnRK1 regulation pathway. The polypeptide is FCS-Like Zinc finger 8 (Arabidopsis thaliana (Mouse-ear cress)).